A 63-amino-acid chain; its full sequence is Gallinacin-4 (63 aa).

An N-terminal signal peptide occupies residues 1 to 19; sequence MKILCFFIVLLFVAVHGAV. Positions 20-25 are excised as a propeptide; that stretch reads GFSRSP. Cystine bridges form between Cys-31–Cys-59, Cys-38–Cys-53, and Cys-43–Cys-60.

Belongs to the beta-defensin family. In terms of tissue distribution, strong expression in the bone marrow and testis. Widely expressed. Weak expression in the ovarian stroma, but not expressed in the ovarian follicles.

The protein localises to the secreted. It localises to the cytoplasmic granule. Has bactericidal activity. Potent activity against S.typhimurium and S.entiriditis. In Gallus gallus (Chicken), this protein is Gallinacin-4 (GAL4).